The following is a 429-amino-acid chain: MSQVSERAINAGLASADPEISRLIDQERHRQETHLELIASENFASQAVMQAQGSVLTNKYAEGLPAKRYYGGCEHVDAIETLAIERAKQLFDAAWANVQPHSGAQANFAVFLALLKPGDTIMGLDLSHGGHLTHGSPVNVSGKWFNVVQYGVDPTTQRLDMEAIRKLALEHKPKLIVCGYSAYPRTIDFAAFRSIADEVGAFLLADMAHIAGLVAAGVHPSPVPHCDVVTTTTHKTLRGPRGGLILCRDAEFAKKFDKAVFPGTQGGPLEHVIAAKAVAFGEALQPSFKTYSQQVVANAGALAEQLISRGINVVSGGTDNHVVLLDLRSIGMTGKVADLLVSDVHITANKNTVPFDPESPFVTSGLRLGTAALTTRGFDVDAFREVADVIADRLHHPEDDAIRQRCLERVSILCSRFPLYADSKEPALV.

Residues L126 and 130–132 (GHL) contribute to the (6S)-5,6,7,8-tetrahydrofolate site. Residue K235 is modified to N6-(pyridoxal phosphate)lysine. 359-361 (SPF) lines the (6S)-5,6,7,8-tetrahydrofolate pocket.

It belongs to the SHMT family. As to quaternary structure, homodimer. It depends on pyridoxal 5'-phosphate as a cofactor.

Its subcellular location is the cytoplasm. It catalyses the reaction (6R)-5,10-methylene-5,6,7,8-tetrahydrofolate + glycine + H2O = (6S)-5,6,7,8-tetrahydrofolate + L-serine. Its pathway is one-carbon metabolism; tetrahydrofolate interconversion. The protein operates within amino-acid biosynthesis; glycine biosynthesis; glycine from L-serine: step 1/1. Catalyzes the reversible interconversion of serine and glycine with tetrahydrofolate (THF) serving as the one-carbon carrier. This reaction serves as the major source of one-carbon groups required for the biosynthesis of purines, thymidylate, methionine, and other important biomolecules. Also exhibits THF-independent aldolase activity toward beta-hydroxyamino acids, producing glycine and aldehydes, via a retro-aldol mechanism. This is Serine hydroxymethyltransferase from Synechococcus sp. (strain CC9902).